A 180-amino-acid polypeptide reads, in one-letter code: Uterocalin (180 aa).

Positions 1 to 18 (MNLLLLAMGLILPRRPHA) are cleaved as a signal peptide. Cysteine 82 and cysteine 175 are oxidised to a cystine. Asparagine 101 is a glycosylation site (N-linked (GlcNAc...) asparagine).

This sequence belongs to the calycin superfamily. Lipocalin family. Expressed in glandular and lumenal epithelia of the endometrium. Is transferred to the embryonic capsule, the conceptus and the yolk sac.

The protein localises to the secreted. In terms of biological role, binds fatty acids and retinol. Is specialized for the preattachment embryo. May be important to maintain the pregnancy and may transport small hydrophobic ligands from mother to the developing embryo. The protein is Uterocalin of Equus caballus (Horse).